A 545-amino-acid polypeptide reads, in one-letter code: Tripartite motif-containing protein 26 (545 aa).

Residues 16-57 (CSICLDYLRDPVTIDCGHVFCRSCTSDIRPISGNRPVCPLCK) form an RING-type zinc finger. The B box-type zinc finger occupies 97–138 (QDMKLCERHQEKLHYYCEDDGKLLCVMCRESREHRPHTAVLV). Residues cysteine 102, histidine 105, cysteine 124, and histidine 130 each contribute to the Zn(2+) site. The stretch at 197–243 (QFLKKREQHLLDQLATLEQLLTEGREKFKTRGVSELDRLTLVISELE) forms a coiled coil. Residues 301–545 (RGLRQFQGKL…WPGARLLLRP (245 aa)) enclose the B30.2/SPRY domain. A disordered region spans residues 382-443 (REGWSEDEEE…EEEEEVQESC (62 aa)). Residues 386-440 (SEDEEEGEEEEEGEEEEEDEEVGYGDGYEDWETDEEDESLGEEEEEEEEEEEEVQ) are compositionally biased toward acidic residues.

The protein belongs to the TRIM/RBCC family. In terms of assembly, interacts with TBK1; this interaction bridges together TBK1 and NEMO in order to activate TBK1. Interacts with INCA1. In terms of processing, autoubiquitinates upon viral infection. In turn, autoubiquitinated TRIM26 recruits NEMO and bridges TBK1-NEMO interaction.

It localises to the cytoplasm. The protein localises to the nucleus. It carries out the reaction S-ubiquitinyl-[E2 ubiquitin-conjugating enzyme]-L-cysteine + [acceptor protein]-L-lysine = [E2 ubiquitin-conjugating enzyme]-L-cysteine + N(6)-ubiquitinyl-[acceptor protein]-L-lysine.. Its function is as follows. E3 ubiquitin-protein ligase which regulates the IFN-beta production and antiviral response downstream of various DNA-encoded pattern-recognition receptors (PRRs). Also plays a central role in determining the response to different forms of oxidative stress by controlling levels of DNA glycosylases NEIL1, NEIL3 and NTH1 that are involved in repair of damaged DNA. Promotes nuclear IRF3 ubiquitination and proteasomal degradation. Bridges together TBK1 and NEMO during the innate response to viral infection leading to the activation of TBK1. Positively regulates LPS-mediated inflammatory innate immune response by catalyzing the 'Lys-11'-linked polyubiquitination of TAB1 to enhance its activation and subsequent NF-kappa-B and MAPK signaling. In a manner independent of its catalytic activity, inhibits WWP2, a SOX2-directed E3 ubiquitin ligase, and thus protects SOX2 from polyubiquitination and proteasomal degradation. Ubiquitinates the histone acetyltransferase protein complex component PHF20 and thereby triggers its degradation in the nucleus after its recruitment by the histone demethylase KDM6B, serving as a scaffold protein. Upon induction by TGF-beta, ubiquitinates the TFIID component TAF7 for proteasomal degradation. Induces ferroptosis by ubiquitinating SLC7A11, a critical protein for lipid reactive oxygen species (ROS) scavenging. This Mus musculus (Mouse) protein is Tripartite motif-containing protein 26 (Trim26).